A 509-amino-acid chain; its full sequence is Maturase K (509 aa).

The protein belongs to the intron maturase 2 family. MatK subfamily.

It localises to the plastid. Its subcellular location is the chloroplast. Its function is as follows. Usually encoded in the trnK tRNA gene intron. Probably assists in splicing its own and other chloroplast group II introns. This chain is Maturase K, found in Vachellia farnesiana (Sweet acacia).